Reading from the N-terminus, the 584-residue chain is N(6)-adenosine-methyltransferase subunit METTL3 (584 aa).

2 disordered regions span residues Met-1–Pro-65 and Lys-162–Val-221. The span at Arg-187–Ser-204 shows a compositional bias: polar residues. The short motif at Asp-213–Lys-220 is the Nuclear localization signal element. S-adenosyl-L-methionine contacts are provided by residues Asp-381–Ile-382 and Asp-399. The gate loop 1 stretch occupies residues Pro-400–Thr-414. Interaction with METTL14 regions lie at residues Asp-454 to Glu-458 and Gln-468 to Lys-484. The interval Gln-466 to Gly-483 is interphase loop. A positively charged region required for RNA-binding region spans residues Arg-469–His-482. The gate loop 2 stretch occupies residues Val-511–Asp-519. S-adenosyl-L-methionine is bound by residues Lys-517, Arg-540–Asn-543, and Asn-553–Gln-554.

This sequence belongs to the MT-A70-like family. As to quaternary structure, heterodimer; heterodimerizes with mettl14 to form an antiparallel heterodimer that constitutes an active methyltransferase. Component of the WMM complex, a N6-methyltransferase complex composed of a catalytic subcomplex, named MAC, and of an associated subcomplex, named MACOM. The MAC subcomplex is composed of mettl3 and mettl14. In terms of tissue distribution, expressed in the hemato-vascular system: enriched in sorted endothelial cells and haemogenic endothelium.

It localises to the nucleus. The protein resides in the nucleus speckle. It is found in the cytoplasm. The enzyme catalyses an adenosine in mRNA + S-adenosyl-L-methionine = an N(6)-methyladenosine in mRNA + S-adenosyl-L-homocysteine + H(+). The METTL3-METTL14 heterodimer forms a N6-methyltransferase complex that methylates adenosine residues at the N(6) position of some RNAs and regulates various processes such as the circadian clock, differentiation of embryonic and hematopoietic stem cells, cortical neurogenesis, response to DNA damage, differentiation of T-cells and primary miRNA processing. In the heterodimer formed with mettl14, mettl3 constitutes the catalytic core. N6-methyladenosine (m6A), which takes place at the 5'-[AG]GAC-3' consensus sites of some mRNAs, plays a role in mRNA stability, processing and translation efficiency. M6A is also involved in hematopoietic stem cells specification: m6A methylation and subsequent destabilization of mRNAs, such as notch1a, leads to decreased Notch signaling, promoting endothelial to hematopoietic transition. M6A also takes place in other RNA molecules, such as primary miRNA (pri-miRNAs). Mediates methylation of pri-miRNAs. The chain is N(6)-adenosine-methyltransferase subunit METTL3 from Danio rerio (Zebrafish).